Reading from the N-terminus, the 486-residue chain is F420-non-reducing hydrogenase iron-sulfur subunit A (486 aa).

The Ni(2+) site is built by cysteine 61 and cysteine 64.

It belongs to the [NiFe]/[NiFeSe] hydrogenase large subunit family. As to quaternary structure, the F420-non-reducing hydrogenase is composed of three subunits; MvhA, MvhD and MvhG. It forms a complex with the heterodisulfide reductase (Hdr). The cofactor is Ni(2+).

Its subcellular location is the cytoplasm. Its function is as follows. Part of a complex that provides reducing equivalents for heterodisulfide reductase. This chain is F420-non-reducing hydrogenase iron-sulfur subunit A (mvhA), found in Archaeoglobus profundus (strain DSM 5631 / JCM 9629 / NBRC 100127 / Av18).